Consider the following 274-residue polypeptide: Endonuclease 8-like L720 (274 aa).

The FPG-type; degenerate zinc finger occupies arginine 241–leucine 274.

It belongs to the FPG family.

This chain is Endonuclease 8-like L720, found in Acanthamoeba polyphaga mimivirus (APMV).